The chain runs to 257 residues: S-methyl-5'-thioadenosine phosphorylase (257 aa).

Phosphate contacts are provided by residues Ser-10, 50–51 (RH), and 83–84 (TA). Met-180 is a binding site for substrate. A phosphate-binding site is contributed by Thr-181. 204-206 (DYD) serves as a coordination point for substrate.

It belongs to the PNP/MTAP phosphorylase family. MTAP subfamily. In terms of assembly, homohexamer. Dimer of a homotrimer.

It catalyses the reaction S-methyl-5'-thioadenosine + phosphate = 5-(methylsulfanyl)-alpha-D-ribose 1-phosphate + adenine. The catalysed reaction is adenosine + phosphate = alpha-D-ribose 1-phosphate + adenine. The protein operates within amino-acid biosynthesis; L-methionine biosynthesis via salvage pathway; S-methyl-5-thio-alpha-D-ribose 1-phosphate from S-methyl-5'-thioadenosine (phosphorylase route): step 1/1. In terms of biological role, catalyzes the reversible phosphorylation of S-methyl-5'-thioadenosine (MTA) to adenine and 5-methylthioribose-1-phosphate. Involved in the breakdown of MTA, a major by-product of polyamine biosynthesis. Responsible for the first step in the methionine salvage pathway after MTA has been generated from S-adenosylmethionine. Has broad substrate specificity with 6-aminopurine nucleosides as preferred substrates. Can also use adenosine as substrate to form ribose 1-phosphate. The sequence is that of S-methyl-5'-thioadenosine phosphorylase from Thermococcus kodakarensis (strain ATCC BAA-918 / JCM 12380 / KOD1) (Pyrococcus kodakaraensis (strain KOD1)).